Reading from the N-terminus, the 407-residue chain is Na(+)-translocating NADH-quinone reductase subunit F (407 aa).

The chain crosses the membrane as a helical span at residues 3 to 23 (IILGVAMFTGIVMVLVLLILF). The region spanning 32-126 (GDIAVEVNGD…NLKIELPEEI (95 aa)) is the 2Fe-2S ferredoxin-type domain. The [2Fe-2S] cluster site is built by Cys69, Cys75, Cys78, and Cys110. The FAD-binding FR-type domain occupies 129-269 (VKKWECEVIS…SGPFGEFFAK (141 aa)).

Belongs to the NqrF family. Composed of six subunits; NqrA, NqrB, NqrC, NqrD, NqrE and NqrF. [2Fe-2S] cluster is required as a cofactor. Requires FAD as cofactor.

The protein localises to the cell inner membrane. It catalyses the reaction a ubiquinone + n Na(+)(in) + NADH + H(+) = a ubiquinol + n Na(+)(out) + NAD(+). Functionally, NQR complex catalyzes the reduction of ubiquinone-1 to ubiquinol by two successive reactions, coupled with the transport of Na(+) ions from the cytoplasm to the periplasm. The first step is catalyzed by NqrF, which accepts electrons from NADH and reduces ubiquinone-1 to ubisemiquinone by a one-electron transfer pathway. The sequence is that of Na(+)-translocating NADH-quinone reductase subunit F from Serratia proteamaculans (strain 568).